The following is a 173-amino-acid chain: Cytochrome c-type biogenesis protein CcmE (173 aa).

Residues 1–8 lie on the Cytoplasmic side of the membrane; the sequence is MNPRRKSR. A helical; Signal-anchor for type II membrane protein membrane pass occupies residues 9 to 29; it reads FKLVIFVVLGIAIASGLMLYA. Residues 30–173 are Periplasmic-facing; it reads LRQNIDLFYT…RDRQEKEGAK (144 aa). 2 residues coordinate heme: His-131 and Tyr-135. The segment at 139-173 is disordered; that stretch reads ELGEKMQKVHKPMGIKAADLKGESERDRQEKEGAK. The segment covering 156 to 173 has biased composition (basic and acidic residues); the sequence is ADLKGESERDRQEKEGAK.

The protein belongs to the CcmE/CycJ family.

It localises to the cell inner membrane. Functionally, heme chaperone required for the biogenesis of c-type cytochromes. Transiently binds heme delivered by CcmC and transfers the heme to apo-cytochromes in a process facilitated by CcmF and CcmH. The polypeptide is Cytochrome c-type biogenesis protein CcmE (Haemophilus influenzae (strain 86-028NP)).